The sequence spans 264 residues: LIMR family protein SELMODRAFT_416716 (264 aa).

The next 4 membrane-spanning stretches (helical) occupy residues 23–43, 96–116, 194–214, and 225–245; these read VVIL…VIGY, ILFT…LIFA, IIWL…FPFL, and WGLL…MSVI.

This sequence belongs to the LIMR family.

The protein resides in the membrane. The protein is LIMR family protein SELMODRAFT_416716 of Selaginella moellendorffii (Spikemoss).